We begin with the raw amino-acid sequence, 608 residues long: X-ray repair cross-complementing protein 6 (608 aa).

The segment covering 1–11 has biased composition (basic and acidic residues); that stretch reads MSEWESYYKTE. The interval 1–29 is disordered; it reads MSEWESYYKTEGEEEEEEEESPDTGGEYK. N-acetylserine is present on Ser-2. At Ser-2 the chain carries Phosphoserine. Ser-6 carries the phosphoserine; by PRKDC modification. Positions 12-22 are enriched in acidic residues; the sequence is GEEEEEEEESP. The active-site Schiff-base intermediate with DNA; for 5'-deoxyribose-5-phosphate lyase activity is the Lys-29. Lys-29 carries the N6-acetyllysine modification. Ser-49 bears the Phosphoserine; by PRKDC mark. The Ku domain occupies 259–466; sequence FKLGEDVVLM…IDKMKAIVQK (208 aa). Residues 275-339 are DNA-binding; it reads VQKANKPFPV…EETEELKRFD (65 aa). Lys-315 is covalently cross-linked (Glycyl lysine isopeptide (Lys-Gly) (interchain with G-Cter in SUMO2)). 3 positions are modified to N6-acetyllysine: Lys-329, Lys-336, and Lys-459. Residues 371–480 are interaction with XRCC5; the sequence is SLVSGSSTLF…YRSDSFENPV (110 aa). 3 positions are modified to phosphoserine: Ser-475, Ser-518, and Ser-548. Residues 534 to 557 form a disordered region; sequence PEGKVAKRKQDDEGSTSKKPKVEL. A compositionally biased stretch (basic and acidic residues) spans 537 to 557; it reads KVAKRKQDDEGSTSKKPKVEL. Positions 548 to 607 are interaction with DEAF1; sequence STSKKPKVELSEEELKAHFRKGTLGKLTVPTLKDICKAHGLKSGPKKQELLDALIRHLEK. Lys-554 participates in a covalent cross-link: Glycyl lysine isopeptide (Lys-Gly) (interchain with G-Cter in SUMO2). The residue at position 558 (Ser-558) is a Phosphoserine. Lys-568 bears the N6,N6,N6-trimethyllysine mark. Residues 571-605 enclose the SAP domain; the sequence is LGKLTVPTLKDICKAHGLKSGPKKQELLDALIRHL. Residues 576–581 form an interaction with BAX region; sequence VPTLKD.

Belongs to the ku70 family. Heterodimer composed of XRCC5/Ku80 and XRCC6/Ku70. Component of the core long-range non-homologous end joining (NHEJ) complex (also named DNA-PK complex) composed of PRKDC, LIG4, XRCC4, XRCC6/Ku70, XRCC5/Ku86 and NHEJ1/XLF. Additional component of the NHEJ complex includes PAXX. Following autophosphorylation, PRKDC dissociates from DNA, leading to formation of the short-range NHEJ complex, composed of LIG4, XRCC4, XRCC6/Ku70, XRCC5/Ku86 and NHEJ1/XLF. The XRCC5-XRCC6 dimer also associates with NAA15, and this complex binds to the osteocalcin promoter and activates osteocalcin expression. In addition, XRCC6 interacts with the osteoblast-specific transcription factors MSX2, RUNX2 and DLX5. Interacts with ELF3. Interacts with ATP23. The XRCC5-XRRC6 dimer associates in a DNA-dependent manner with APEX1. Binds to CDK9. Identified in a complex with DEAF1 and XRCC5. Interacts with DEAF1 (via the SAND domain); the interaction is direct and may be inhibited by DNA-binding. Interacts with CLU. Interacts with NR4A3; the DNA-dependent protein kinase complex DNA-PK phosphorylates and activates NR4A3 and prevents NR4A3 ubiquitinylation and degradation. Interacts with CYREN (via KBM motif). Interacts (via N-terminus) with HSF1 (via N-terminus); this interaction is direct and prevents XRCC5/XRCC6 heterodimeric binding and non-homologous end joining (NHEJ) repair activities induced by ionizing radiation (IR). Part of the HDP-RNP complex composed of at least HEXIM1, PRKDC, XRCC5, XRCC6, paraspeckle proteins (SFPQ, NONO, PSPC1, RBM14, and MATR3) and NEAT1 RNA. Interacts with HMBOX1. Interacts with ATF7. Interacts with APLF (via KBM motif). Interacts with WRN (via KBM motif). The XRCC5-XRCC6 dimer associates with ALKBH2. Interacts with TPRN; TPRN interacts with a number of DNA damage response proteins, is recruited to sites of DNA damage and may play a role in DNA damage repair. When not acetylated, interacts with BAX. Interacts with ERCC6L2. Phosphorylation by PRKDC may enhance helicase activity. Phosphorylation of Ser-49 does not affect DNA repair. In terms of processing, ADP-ribosylated by PARP3. Post-translationally, methylation by SETD4 leads to accumulation in the cytoplasm and is a prerequisite for acetylation, possibly due to the change of subcellular from the nucleus to the cytosol initiated by methylation, acetylation occurring in the cytosol. Acetylation can be catalyzed in vitro by CREBBP/CBP and KAT2B/PCAF.

It localises to the nucleus. The protein localises to the chromosome. It is found in the cytoplasm. Its function is as follows. Single-stranded DNA-dependent ATP-dependent helicase that plays a key role in DNA non-homologous end joining (NHEJ) by recruiting DNA-PK to DNA. Required for double-strand break repair and V(D)J recombination. Also has a role in chromosome translocation. Has a role in chromosome translocation. The DNA helicase II complex binds preferentially to fork-like ends of double-stranded DNA in a cell cycle-dependent manner. It works in the 3'-5' direction. During NHEJ, the XRCC5-XRRC6 dimer performs the recognition step: it recognizes and binds to the broken ends of the DNA and protects them from further resection. Binding to DNA may be mediated by XRCC6. The XRCC5-XRRC6 dimer acts as a regulatory subunit of the DNA-dependent protein kinase complex DNA-PK by increasing the affinity of the catalytic subunit PRKDC to DNA by 100-fold. The XRCC5-XRRC6 dimer is probably involved in stabilizing broken DNA ends and bringing them together. The assembly of the DNA-PK complex to DNA ends is required for the NHEJ ligation step. Probably also acts as a 5'-deoxyribose-5-phosphate lyase (5'-dRP lyase), by catalyzing the beta-elimination of the 5' deoxyribose-5-phosphate at an abasic site near double-strand breaks. 5'-dRP lyase activity allows to 'clean' the termini of abasic sites, a class of nucleotide damage commonly associated with strand breaks, before such broken ends can be joined. The XRCC5-XRRC6 dimer together with APEX1 acts as a negative regulator of transcription. In association with NAA15, the XRCC5-XRRC6 dimer binds to the osteocalcin promoter and activates osteocalcin expression. Plays a role in the regulation of DNA virus-mediated innate immune response by assembling into the HDP-RNP complex, a complex that serves as a platform for IRF3 phosphorylation and subsequent innate immune response activation through the cGAS-STING pathway. Negatively regulates apoptosis by interacting with BAX and sequestering it from the mitochondria. Might have deubiquitination activity, acting on BAX. This is X-ray repair cross-complementing protein 6 (Xrcc6) from Mus musculus (Mouse).